The following is a 342-amino-acid chain: S-adenosylmethionine:tRNA ribosyltransferase-isomerase (342 aa).

The protein belongs to the QueA family. In terms of assembly, monomer.

Its subcellular location is the cytoplasm. It carries out the reaction 7-aminomethyl-7-carbaguanosine(34) in tRNA + S-adenosyl-L-methionine = epoxyqueuosine(34) in tRNA + adenine + L-methionine + 2 H(+). The protein operates within tRNA modification; tRNA-queuosine biosynthesis. Its function is as follows. Transfers and isomerizes the ribose moiety from AdoMet to the 7-aminomethyl group of 7-deazaguanine (preQ1-tRNA) to give epoxyqueuosine (oQ-tRNA). This Geobacillus sp. (strain WCH70) protein is S-adenosylmethionine:tRNA ribosyltransferase-isomerase.